The primary structure comprises 76 residues: Kappa-actitoxin-Avd4o (76 aa).

The first 19 residues, 1–19 (MNKALFLSLVVLCAAVVFA), serve as a signal peptide directing secretion. A propeptide spanning residues 20-33 (AEDLQKAKHAPFKL) is cleaved from the precursor. 3 disulfide bridges follow: Cys-37–Cys-72, Cys-39–Cys-65, and Cys-55–Cys-73.

Belongs to the sea anemone type 3 (BDS) potassium channel toxin family. As to expression, experimental results show no expression in the ectodermal tissue from the distal and proximal tentacles, body wall, and oral disk. Since paralogs are expressed in this tissue, an expression of this toxin in this tissue is probable. The negative results could be explained by the very low abundance of EST sequences.

It is found in the secreted. The protein resides in the nematocyst. Blocks Kv3 voltage-gated potassium channels. Reduces blood pressure. The protein is Kappa-actitoxin-Avd4o of Anemonia viridis (Snakelocks anemone).